A 521-amino-acid chain; its full sequence is Bifunctional purine biosynthesis protein PurH (521 aa).

The MGS-like domain maps to 1 to 145 (MIKQALISVS…KNHRDVTVVV (145 aa)).

It belongs to the PurH family.

It carries out the reaction (6R)-10-formyltetrahydrofolate + 5-amino-1-(5-phospho-beta-D-ribosyl)imidazole-4-carboxamide = 5-formamido-1-(5-phospho-D-ribosyl)imidazole-4-carboxamide + (6S)-5,6,7,8-tetrahydrofolate. It catalyses the reaction IMP + H2O = 5-formamido-1-(5-phospho-D-ribosyl)imidazole-4-carboxamide. It participates in purine metabolism; IMP biosynthesis via de novo pathway; 5-formamido-1-(5-phospho-D-ribosyl)imidazole-4-carboxamide from 5-amino-1-(5-phospho-D-ribosyl)imidazole-4-carboxamide (10-formyl THF route): step 1/1. It functions in the pathway purine metabolism; IMP biosynthesis via de novo pathway; IMP from 5-formamido-1-(5-phospho-D-ribosyl)imidazole-4-carboxamide: step 1/1. This chain is Bifunctional purine biosynthesis protein PurH, found in Burkholderia cenocepacia (strain ATCC BAA-245 / DSM 16553 / LMG 16656 / NCTC 13227 / J2315 / CF5610) (Burkholderia cepacia (strain J2315)).